The following is a 431-amino-acid chain: AEWKEEVEVLVQRVVKDITGAFRRNPNIDEIGLIPCPEATYNRSPIVLVENKLGVESWCIKFLLPYVHNKLLLYRQKKLWLNRDELIDVTCTLLLLNPDFTTAWNVRKELIQSGTLNPVKDLQLGKLALTKFPKSPETWIHRRWVLQRVVQELVVAAVVGKDATCPETYERIQTIVQEEMHVCYEAAGRYPSNYNSWSHRIWVIQHLGNLNVKLLIDELSSTKHWVSMHVSDHSGFHYRQFLLKSLLCKTLKDSDNVTAVPDLIANEKNPCLPREGEAIWNQICFDLPYLLEEEMKLNRELLDSYPGHETLWCHRRQIFKLIHQLLLEQSQSATPQSTSASITDGSGNISHLSSTFQSYVTNPMDVDGMSDPNKQGYTQETKRLKRAPVQDSLSLDSELRFINCVLTNCCSPEQSRFAASYRKWLLSLQGY.

PFTA repeat units follow at residues Glu-85 to Pro-118, Lys-120 to Leu-153, Glu-178 to Asn-211, Asp-217 to Thr-250, and Glu-293 to Leu-326. The disordered stretch occupies residues Pro-363–Arg-383. A PFTA 6 repeat occupies Ser-394–Tyr-431.

The protein belongs to the protein prenyltransferase subunit alpha family.

The sequence is that of Protein prenyltransferase alpha subunit repeat-containing protein 1-B (ptar1-b) from Xenopus laevis (African clawed frog).